The sequence spans 1773 residues: MRRGNISPAFWFLWLLLFGLLGPSSENTTAFTKGSDTTTASITGSETTMASTMASTSALTTGSKITTDSTTGSETTSASTMASTAAFTTGSETNTASTTDSGTTIASTRTFTTGSDTTTGSTAGSETIVASTTVSGTTTTFTIASTTVPETTMASSTTSTAGSEKTMASSIISETTMASTTGSETATVSTTGSETTTTSTASSEATKVSTTGSETTTASTAGSETTTTSTSMAGSEATTTSTADSKVITASSMSSETTVAPAAGSNTTTASTTGSETTTILIKASETTTASTAGSETTTPSPTGSQTTIVSISGSEITTTSTAGSENTTVSSAGSGTTTASMAGSETTVSTAGSETTTVSITGTETTMVSAMGSETTTNSTTSSETTVTSTAGSETTTVSTVGSETTTAYTADSETTAASTTGSEMTTVFTAGSETITPSTAGSETTTVSTAGSETTTVSTTGSETTTASTAHSETTAASTMGSETTKVSTAGSETTVSTAGSETTAASTEDSETNTAFTEDSKTTTASTTGFETTAASTTGSEPTMASTMGSETTMASTIGPETTKVSTASSEVTTVFAAGSETIRASTVGSETTTVSTTGSETTTASIMGSETSTDSTTGSETTTASTEGSETTTASTEGSEATTVSTTGSETTTVSITDSETTTTCTEGSEMTAVSTTVFETTTASTEGSEITIASTSDSETTTASTEGSETTTVTTAGSETKTAYTTGSETTTASNTGLETTTVFTIGSDTTTASTEGSETTAVSATGSEMTTVSTEGSENTTVSTTGSETTTVSTTGLETTTTSTEGSEMTTVSTTGAETTTDSTEGSGTTAASTAGSETTTVSTADSENTTASTADSETTSASTTGSETTTASTTSSETTTASTEGSETTTVSTTDSETTMVSTTGSERTITSTEGSETTTVSATGSETTVSTEGSGTTTVSITGSETTKVSTTGSETTTTSTEGSEITTASITGSETTTASTEGSETTTASTEGSETTSASTTGSETTTASTTSSETTMASIMGSETTMASTIGSETTKVSTASSKMTTVFTENSETTIASTTASETTTVSTAGSETIPASTAGSETTTTTSTEGSETTTASTEGSETTTASTESSETTTATTIGSETTTASTEGSETTTTSTEGSETTTASTEGSEITTVSTTGSETTTASTEGSETTTASTEGSELTTVSTTGSETITVSAEGSETTTVTTMGSETTTASTAGSETTTVSTAGSETTTASIEGSETTTVSSTGSETTTVSTTGTETTITSTEGSETTTVTTAGSETTAVYTTGSETTTTSTEGSETTTVSTTGSETTTASTADLETTTVSTSGSGTTTASTAGSETTTVYITGSKTTTASTEGSEATTVSTTSSETTTASTTGSEMTTVFTTVSETTTVSTIGSEATTSSAAGSEATTTSTEGSETTTASTAGSETTTASTAGSETTTASTSGSETNTACTTGSETSTPSSAGSETNTAFIIGSESTIASTASLEPTATSLTGSETTTVSITASGATAASTTVSSTTFVLTKATDVSIQPITNTPMSGTRTTGTRLTASSSVTMAPGMDFTASAASHTVPGIVLNTSGLGTSTMGASSTTSAHGVRTTTGSTREPTSSTFQETGPVSMGTNTVSMSHTPTNVIKPSGYLQPWAIILISLAAVVAAVGLSVGLSFCLRNLFFPLRYCGIYYPHGHSHSLGLDLNLGLGSGTFHSLGNALVHGGELEMGHGGTHGFGYGVGHGLSHIHGDGYGVNHGGHYGHGGGH.

Positions 1–26 (MRRGNISPAFWFLWLLLFGLLGPSSE) are cleaved as a signal peptide. Residues 27–1660 (NTTAFTKGSD…VIKPSGYLQP (1634 aa)) are Extracellular-facing. Disordered stretches follow at residues 61 to 102 (TGSK…TDSG), 176 to 357 (TMAS…SETT), 372 to 405 (MGSE…VGSE), 434 to 572 (SETI…STAS), 590 to 674 (TVGS…EGSE), 754 to 1026 (DTTT…ETTM), 1064 to 1485 (TTIA…GSET), and 1603 to 1639 (MGAS…SMGT). The segment at 153–1514 (MASSTTSTAG…PTATSLTGSE (1362 aa)) is 124 X 10 AA approximate repeats. Over residues 178 to 243 (ASTTGSETAT…GSEATTTSTA (66 aa)) the composition is skewed to low complexity. Over residues 248 to 258 (ITASSMSSETT) the composition is skewed to polar residues. Positions 262-357 (AAGSNTTTAS…TVSTAGSETT (96 aa)) are enriched in low complexity. Low complexity-rich tracts occupy residues 440–481 (STAG…AAST) and 490–546 (STAG…SEPT). Positions 547–572 (MASTMGSETTMASTIGPETTKVSTAS) are enriched in polar residues. 2 stretches are compositionally biased toward low complexity: residues 755 to 1025 (TTTA…SETT) and 1064 to 1465 (TTIA…GSET). Composition is skewed to polar residues over residues 1466–1485 (NTAC…GSET) and 1615–1639 (RTTT…SMGT). Residues 1661–1681 (WAIILISLAAVVAAVGLSVGL) form a helical membrane-spanning segment. Residues 1682 to 1773 (SFCLRNLFFP…GGHYGHGGGH (92 aa)) lie on the Cytoplasmic side of the membrane.

Expressed in lung by serous cells of the submucosal gland (at protein level). Detected in the placenta, lung and testis.

The protein resides in the membrane. This Homo sapiens (Human) protein is Mucin-22 (MUC22).